Reading from the N-terminus, the 449-residue chain is Probable multidrug resistance protein NorM (449 aa).

Helical transmembrane passes span 17-39, 54-76, 97-119, 129-151, 164-186, 196-215, 243-265, 280-302, 315-337, 352-369, 390-412, and 417-439; these read LMWPILITQFAQAGLGLIDTIMA, VGLWMPVMLLFSAIMIATTPLVA, VAVSLGVIAMLILQLMPFLLPIL, AGLFLHAIGFGMPAVTMYAALRG, VISLLALVVLVPLNYIFMYGIGP, GFATAILQWLMLITLASYIY, LGLPIGLAVFFEVSIFSTGAIVL, MSVTSQLFMIPMSLAIALTIRVG, LVQKLGLATATFFAMCTMSLIWF, VFDIALYLLLFAMAYQLM, MWITLIAYWVVAFPVGTYLARVA, and AGVWLGLITGLSIACVLLLMRLY.

This sequence belongs to the multi antimicrobial extrusion (MATE) (TC 2.A.66.1) family.

Its subcellular location is the cell inner membrane. In terms of biological role, multidrug efflux pump. This Acinetobacter baylyi (strain ATCC 33305 / BD413 / ADP1) protein is Probable multidrug resistance protein NorM (norM).